We begin with the raw amino-acid sequence, 356 residues long: Protein MGF 360-3L (356 aa).

The stretch at 61–93 (KLNTALVLAVKENNEDLIMLFTEWGANINYGLL) is one ANK repeat.

Belongs to the asfivirus MGF 360 family.

In terms of biological role, plays a role in virus cell tropism, and may be required for efficient virus replication in macrophages. The sequence is that of Protein MGF 360-3L from African swine fever virus (isolate Warthog/Namibia/Wart80/1980) (ASFV).